We begin with the raw amino-acid sequence, 221 residues long: NADH-ubiquinone oxidoreductase chain 4 (221 aa).

Transmembrane regions (helical) follow at residues 5–25 (YTYIIYVIGVITILYASFSTL), 34–54 (IAYSSVSHAAVYLIGAFSNTI), 61–81 (IALGLAHGFVSSGLFICAGGI), 100–120 (IMPIFSVLFFILALGNSGTPL), 140–160 (ILGVLASTSIVFSAAYTIFMY), and 185–205 (FIMLLVFVILTVLFGIYPAPI).

It belongs to the complex I subunit 4 family.

The protein localises to the mitochondrion membrane. The enzyme catalyses a ubiquinone + NADH + 5 H(+)(in) = a ubiquinol + NAD(+) + 4 H(+)(out). Core subunit of the mitochondrial membrane respiratory chain NADH dehydrogenase (Complex I) that is believed to belong to the minimal assembly required for catalysis. Complex I functions in the transfer of electrons from NADH to the respiratory chain. The immediate electron acceptor for the enzyme is believed to be ubiquinone. The sequence is that of NADH-ubiquinone oxidoreductase chain 4 (nd4) from Emericella nidulans (Aspergillus nidulans).